Here is a 20-residue protein sequence, read N- to C-terminus: Putative 18 kDa spermidine-binding protein (20 aa).

As to quaternary structure, dimer of 18 kDa and 60 kDa subunit.

Its subcellular location is the microsome membrane. It localises to the endoplasmic reticulum membrane. Functionally, may have spermidine-binding activity. This is Putative 18 kDa spermidine-binding protein from Zea mays (Maize).